A 59-amino-acid chain; its full sequence is MVQVVLGEDEGIESALRRFKRQVSKAGILADVKRRRHFETPLEKKKRKRIATRRKRRFR.

This sequence belongs to the bacterial ribosomal protein bS21 family.

The protein is Small ribosomal subunit protein bS21 of Acaryochloris marina (strain MBIC 11017).